A 415-amino-acid polypeptide reads, in one-letter code: MVDHLLPVDETFSSPKCSVGYLGDRLASRQPYHMLPSPISEDDSDVSSPCSCASPDSQAFCSCYSAGPGPEAQGSILDFLLSRATLGSGGGSGGIGDSSGPVTWGSWRRASVPVKEEHFCFPEFLSGDTDDVSRPFQPTLEEIEEFLEENMEAEVKEAPENGSRDLETCSQLSAGSHRSHLHPESAGRERCTPPPGGTSGGGAQSAGEGPAHDGPVPVLLQIQPVAVKQEAGTGPASPGQAPESVKVAQLLVNIQGQTFALLPQVVPSSNLNLPSKFVRIAPVPIAAKPIGSGSLGPGPAGLLVGQKFPKNPAAELLKMHKCTFPGCSKMYTKSSHLKAHLRRHTGEKPFACTWPGCGWRFSRSDELSRHRRSHSGVKPYQCPVCEKKFARSDHLSKHIKVHRFPRSSRAVRAIN.

Positions 75-83 match the 9aaTAD motif; it reads SILDFLLSR. Positions 172–216 are disordered; the sequence is LSAGSHRSHLHPESAGRERCTPPPGGTSGGGAQSAGEGPAHDGPV. The span at 181–191 shows a compositional bias: basic and acidic residues; it reads LHPESAGRERC. 3 consecutive C2H2-type zinc fingers follow at residues 320–344, 350–374, and 380–402; these read HKCT…LRRH, FACT…RRSH, and YQCP…IKVH.

This sequence belongs to the Sp1 C2H2-type zinc-finger protein family. In terms of assembly, interacts with MYOCD. Interacts with EP300. As to expression, expressed in aortic smooth muscle cells.

It is found in the nucleus. Functionally, transcriptional regulator that binds to the GA element of the CLCNKA promoter. Binds to the KCNIP2 promoter and regulates KCNIP2 circadian expression in the heart. Is a repressor of CCN2 expression, involved in the control of cardiac fibrosis. Is also involved in the control of cardiac hypertrophy acting through the inhibition of MEF2A, GATA4 and MYOCD activity. Is a negative regulator of TP53 acetylation. Inhibits NF-kappa-B activation through repression of EP300-dependent RELA acetylation. Involved in podocyte differentiation. The protein is Krueppel-like factor 15 (Klf15) of Mus musculus (Mouse).